Here is a 445-residue protein sequence, read N- to C-terminus: Tubulin beta-1 chain (445 aa).

The MREI motif motif lies at 1–4 (MREI). Residues Gln11, Glu69, Ser138, Gly142, Thr143, Gly144, Asn204, and Asn226 each contribute to the GTP site. Glu69 is a binding site for Mg(2+). A disordered region spans residues 425-445 (YQDATAEEEGEFEEEGEEELA). Positions 429 to 445 (TAEEEGEFEEEGEEELA) are enriched in acidic residues. Glu438 carries the post-translational modification 5-glutamyl polyglutamate.

It belongs to the tubulin family. As to quaternary structure, dimer of alpha and beta chains. A typical microtubule is a hollow water-filled tube with an outer diameter of 25 nm and an inner diameter of 15 nM. Alpha-beta heterodimers associate head-to-tail to form protofilaments running lengthwise along the microtubule wall with the beta-tubulin subunit facing the microtubule plus end conferring a structural polarity. Microtubules usually have 13 protofilaments but different protofilament numbers can be found in some organisms and specialized cells. It depends on Mg(2+) as a cofactor. In terms of processing, some glutamate residues at the C-terminus are polyglycylated, resulting in polyglycine chains on the gamma-carboxyl group. Glycylation is mainly limited to tubulin incorporated into axonemes (cilia and flagella) whereas glutamylation is prevalent in neuronal cells, centrioles, axonemes, and the mitotic spindle. Both modifications can coexist on the same protein on adjacent residues, and lowering polyglycylation levels increases polyglutamylation, and reciprocally. The precise function of polyglycylation is still unclear. Some glutamate residues at the C-terminus are polyglutamylated, resulting in polyglutamate chains on the gamma-carboxyl group. Polyglutamylation plays a key role in microtubule severing by spastin (SPAST). SPAST preferentially recognizes and acts on microtubules decorated with short polyglutamate tails: severing activity by SPAST increases as the number of glutamates per tubulin rises from one to eight, but decreases beyond this glutamylation threshold.

It is found in the cytoplasm. It localises to the cytoskeleton. In terms of biological role, tubulin is the major constituent of microtubules, a cylinder consisting of laterally associated linear protofilaments composed of alpha- and beta-tubulin heterodimers. Microtubules grow by the addition of GTP-tubulin dimers to the microtubule end, where a stabilizing cap forms. Below the cap, tubulin dimers are in GDP-bound state, owing to GTPase activity of alpha-tubulin. This Gadus morhua (Atlantic cod) protein is Tubulin beta-1 chain.